We begin with the raw amino-acid sequence, 194 residues long: Peptide deformylase (194 aa).

The Fe cation site is built by Cys105 and His147. Residue Glu148 is part of the active site. Residue His151 coordinates Fe cation.

It belongs to the polypeptide deformylase family. Fe(2+) is required as a cofactor.

The catalysed reaction is N-terminal N-formyl-L-methionyl-[peptide] + H2O = N-terminal L-methionyl-[peptide] + formate. Removes the formyl group from the N-terminal Met of newly synthesized proteins. Requires at least a dipeptide for an efficient rate of reaction. N-terminal L-methionine is a prerequisite for activity but the enzyme has broad specificity at other positions. This Flavobacterium psychrophilum (strain ATCC 49511 / DSM 21280 / CIP 103535 / JIP02/86) protein is Peptide deformylase.